The chain runs to 134 residues: Large-conductance mechanosensitive channel (134 aa).

The next 2 membrane-spanning stretches (helical) occupy residues 16 to 36 (VIDL…VTAL) and 81 to 101 (GDFI…FIIV).

Belongs to the MscL family. As to quaternary structure, homopentamer.

Its subcellular location is the cell inner membrane. In terms of biological role, channel that opens in response to stretch forces in the membrane lipid bilayer. May participate in the regulation of osmotic pressure changes within the cell. The protein is Large-conductance mechanosensitive channel of Xylella fastidiosa (strain Temecula1 / ATCC 700964).